The sequence spans 192 residues: Imidazoleglycerol-phosphate dehydratase (192 aa).

This sequence belongs to the imidazoleglycerol-phosphate dehydratase family.

The protein localises to the cytoplasm. It carries out the reaction D-erythro-1-(imidazol-4-yl)glycerol 3-phosphate = 3-(imidazol-4-yl)-2-oxopropyl phosphate + H2O. Its pathway is amino-acid biosynthesis; L-histidine biosynthesis; L-histidine from 5-phospho-alpha-D-ribose 1-diphosphate: step 6/9. In Carboxydothermus hydrogenoformans (strain ATCC BAA-161 / DSM 6008 / Z-2901), this protein is Imidazoleglycerol-phosphate dehydratase.